Here is a 192-residue protein sequence, read N- to C-terminus: 7-methyl-GTP pyrophosphatase (192 aa).

The active-site Proton acceptor is Asp69.

This sequence belongs to the Maf family. YceF subfamily. A divalent metal cation is required as a cofactor.

It localises to the cytoplasm. The enzyme catalyses N(7)-methyl-GTP + H2O = N(7)-methyl-GMP + diphosphate + H(+). Its function is as follows. Nucleoside triphosphate pyrophosphatase that hydrolyzes 7-methyl-GTP (m(7)GTP). May have a dual role in cell division arrest and in preventing the incorporation of modified nucleotides into cellular nucleic acids. This chain is 7-methyl-GTP pyrophosphatase, found in Pseudomonas syringae pv. syringae (strain B728a).